The primary structure comprises 404 residues: S-adenosylmethionine synthase (404 aa).

Over residues 1–13 the composition is skewed to polar residues; it reads MSQSRYFFTSESV. The interval 1–20 is disordered; that stretch reads MSQSRYFFTSESVSEGHPDK. Position 17 (histidine 17) interacts with ATP. Aspartate 19 is a binding site for Mg(2+). Glutamate 45 lines the K(+) pocket. L-methionine contacts are provided by glutamate 58 and glutamine 101. The segment at 101 to 111 is flexible loop; it reads QSPDINRGVDR. Residues 172–174, 245–246, aspartate 254, 260–261, alanine 277, and lysine 281 contribute to the ATP site; these read DAK, RF, and RK. Aspartate 254 is a binding site for L-methionine. Lysine 285 provides a ligand contact to L-methionine.

Belongs to the AdoMet synthase family. In terms of assembly, homotetramer; dimer of dimers. Mg(2+) serves as cofactor. Requires K(+) as cofactor.

The protein localises to the cytoplasm. It carries out the reaction L-methionine + ATP + H2O = S-adenosyl-L-methionine + phosphate + diphosphate. The protein operates within amino-acid biosynthesis; S-adenosyl-L-methionine biosynthesis; S-adenosyl-L-methionine from L-methionine: step 1/1. Its function is as follows. Catalyzes the formation of S-adenosylmethionine (AdoMet) from methionine and ATP. The overall synthetic reaction is composed of two sequential steps, AdoMet formation and the subsequent tripolyphosphate hydrolysis which occurs prior to release of AdoMet from the enzyme. The polypeptide is S-adenosylmethionine synthase (Chlorobium limicola (strain DSM 245 / NBRC 103803 / 6330)).